A 1942-amino-acid polypeptide reads, in one-letter code: Myosin-1 (1942 aa).

Residues 33-82 enclose the Myosin N-terminal SH3-like domain; the sequence is DAKSSVFVVDAKESFVKATVQSREGGKVTAKTEGGTTVTVKDDQVYPMNP. Ser-36 carries the post-translational modification Phosphoserine. 2 positions are modified to phosphothreonine: Thr-64 and Thr-69. A Myosin motor domain is found at 86-785; the sequence is DKIEDMAMMT…LLGLLEEMRD (700 aa). Lys-130 is modified (N6,N6,N6-trimethyllysine). An ATP-binding site is contributed by 179–186; it reads GESGAGKT. Tyr-389 carries the post-translational modification Phosphotyrosine. Thr-419 is modified (phosphothreonine). Residue Tyr-424 is modified to Phosphotyrosine. Residue Ser-625 is modified to Phosphoserine. The interval 662 to 684 is actin-binding; it reads LNKLMTNLRSTHPHFVRCIIPNE. At His-760 the chain carries Pros-methylhistidine. The actin-binding stretch occupies residues 764–778; it reads KFGHTKVFFKAGLLG. Positions 788–817 constitute an IQ domain; that stretch reads LAQLITRTQAMCRGYLARVEYQKMVERRES. The stretch at 846-1942 forms a coiled coil; that stretch reads LLKSAETEKE…EVHTKIISEE (1097 aa). 5 positions are modified to phosphoserine: Ser-1095, Ser-1099, Ser-1165, Ser-1240, and Ser-1246. The disordered stretch occupies residues 1156–1175; that stretch reads RLEEAGGATSAQIEMNKKRE. Residue Thr-1258 is modified to Phosphothreonine. The residue at position 1264 (Ser-1264) is a Phosphoserine. A phosphothreonine mark is found at Thr-1268 and Thr-1289. A phosphoserine mark is found at Ser-1291, Ser-1295, Ser-1306, and Ser-1309. Tyr-1467 is subject to Phosphotyrosine. Thr-1470 bears the Phosphothreonine mark. Ser-1477 carries the post-translational modification Phosphoserine. Tyr-1495 is subject to Phosphotyrosine. Ser-1498 carries the phosphoserine modification. Thr-1504 is modified (phosphothreonine). At Ser-1517 the chain carries Phosphoserine. Position 1520 is a phosphothreonine (Thr-1520). 7 positions are modified to phosphoserine: Ser-1545, Ser-1557, Ser-1577, Ser-1603, Ser-1606, Ser-1717, and Ser-1729. 2 positions are modified to phosphothreonine: Thr-1733 and Thr-1739. Residue Ser-1742 is modified to Phosphoserine.

This sequence belongs to the TRAFAC class myosin-kinesin ATPase superfamily. Myosin family. As to quaternary structure, muscle myosin is a hexameric protein that consists of 2 heavy chain subunits (MHC), 2 alkali light chain subunits (MLC) and 2 regulatory light chain subunits (MLC-2). Interacts with SLC26A5. Expressed in the cochlea (at protein level). Strongly expressed in spiral ganglion neurons with axonal sprouts and supporting cells around hair cells. In the organ of Corti, it is expressed in inner and outer hair cells, and in supporting cells.

The protein localises to the cytoplasm. The protein resides in the myofibril. Required for normal hearing. It plays a role in cochlear amplification of auditory stimuli, likely through the positive regulation of prestin (SLC26A5) activity and outer hair cell (OHC) electromotility. The protein is Myosin-1 of Mus musculus (Mouse).